Here is a 187-residue protein sequence, read N- to C-terminus: NADH-quinone oxidoreductase subunit B (187 aa).

Residues cysteine 51, cysteine 52, cysteine 117, and cysteine 149 each coordinate [4Fe-4S] cluster.

This sequence belongs to the complex I 20 kDa subunit family. In terms of assembly, NDH-1 is composed of 14 different subunits. Subunits NuoB, C, D, E, F, and G constitute the peripheral sector of the complex. The cofactor is [4Fe-4S] cluster.

It is found in the cell inner membrane. The enzyme catalyses a quinone + NADH + 5 H(+)(in) = a quinol + NAD(+) + 4 H(+)(out). In terms of biological role, NDH-1 shuttles electrons from NADH, via FMN and iron-sulfur (Fe-S) centers, to quinones in the respiratory chain. The immediate electron acceptor for the enzyme in this species is believed to be ubiquinone. Couples the redox reaction to proton translocation (for every two electrons transferred, four hydrogen ions are translocated across the cytoplasmic membrane), and thus conserves the redox energy in a proton gradient. The protein is NADH-quinone oxidoreductase subunit B of Nitratidesulfovibrio vulgaris (strain DSM 19637 / Miyazaki F) (Desulfovibrio vulgaris).